The sequence spans 213 residues: MASLFKKKTVDDVIKEQNRELRGTQRAIIRDRAALEKQEKQLELEIKKMAKIGNKEACKVLAKQLVHLRKQKTRTFAVSSKVTSMSTQTKVMNSQMKMAGAMSTTAKTMQAVNKKMDPQKTLQTMQNFQKENMKMEMTEEMINDTLDDIFDGSDDEEESQDIVNQVLDEIGIEISGKMAKAPSAARSLPSASTSKATISDEEIERQLKALGVD.

An N-acetylalanine modification is found at A2. Residues 25–55 (QRAIIRDRAALEKQEKQLELEIKKMAKIGNK) adopt a coiled-coil conformation. Low complexity predominate over residues 179 to 194 (AKAPSAARSLPSASTS). A disordered region spans residues 179–199 (AKAPSAARSLPSASTSKATIS). Phosphoserine is present on S199. Positions 201–211 (EEIERQLKALG) match the MIT-interacting motif motif.

The protein belongs to the SNF7 family. Probable core component of the endosomal sorting required for transport complex III (ESCRT-III). ESCRT-III components are thought to multimerize to form a flat lattice on the perimeter membrane of the endosome. Several assembly forms of ESCRT-III may exist that interact and act sequentially. Interacts with CHMP2A. Interacts with VPS4A. Interacts with VPS4B; the interaction is direct. Widely expressed. Expressed in brain, heart, skeletal muscle, spleen, kidney, liver, small intestine, pancreas, lung, placenta and leukocytes. In brain, it is expressed in cerebellum, cerebral cortex, medulla, spinal cord, occipital lobe, frontal lobe, temporal lobe and putamen.

The protein resides in the cytoplasm. It localises to the cytosol. The protein localises to the late endosome membrane. Its function is as follows. Probable core component of the endosomal sorting required for transport complex III (ESCRT-III) which is involved in multivesicular bodies (MVBs) formation and sorting of endosomal cargo proteins into MVBs. MVBs contain intraluminal vesicles (ILVs) that are generated by invagination and scission from the limiting membrane of the endosome and mostly are delivered to lysosomes enabling degradation of membrane proteins, such as stimulated growth factor receptors, lysosomal enzymes and lipids. The MVB pathway appears to require the sequential function of ESCRT-O, -I,-II and -III complexes. ESCRT-III proteins mostly dissociate from the invaginating membrane before the ILV is released. The ESCRT machinery also functions in topologically equivalent membrane fission events, such as the terminal stages of cytokinesis and the budding of enveloped viruses (HIV-1 and other lentiviruses). ESCRT-III proteins are believed to mediate the necessary vesicle extrusion and/or membrane fission activities, possibly in conjunction with the AAA ATPase VPS4. This Homo sapiens (Human) protein is Charged multivesicular body protein 2b (CHMP2B).